Consider the following 577-residue polypeptide: Proline--tRNA ligase (577 aa).

The protein belongs to the class-II aminoacyl-tRNA synthetase family. ProS type 1 subfamily. Homodimer.

It localises to the cytoplasm. It catalyses the reaction tRNA(Pro) + L-proline + ATP = L-prolyl-tRNA(Pro) + AMP + diphosphate. Its function is as follows. Catalyzes the attachment of proline to tRNA(Pro) in a two-step reaction: proline is first activated by ATP to form Pro-AMP and then transferred to the acceptor end of tRNA(Pro). As ProRS can inadvertently accommodate and process non-cognate amino acids such as alanine and cysteine, to avoid such errors it has two additional distinct editing activities against alanine. One activity is designated as 'pretransfer' editing and involves the tRNA(Pro)-independent hydrolysis of activated Ala-AMP. The other activity is designated 'posttransfer' editing and involves deacylation of mischarged Ala-tRNA(Pro). The misacylated Cys-tRNA(Pro) is not edited by ProRS. This chain is Proline--tRNA ligase, found in Chlamydia caviae (strain ATCC VR-813 / DSM 19441 / 03DC25 / GPIC) (Chlamydophila caviae).